Here is a 1036-residue protein sequence, read N- to C-terminus: Isoleucine--tRNA ligase (1036 aa).

The short motif at 46 to 56 (PFATGLPHYGH) is the 'HIGH' region element. Residues 589 to 593 (KMSKR) carry the 'KMSKS' region motif. An ATP-binding site is contributed by Lys-592.

The protein belongs to the class-I aminoacyl-tRNA synthetase family. IleS type 2 subfamily. In terms of assembly, monomer. Zn(2+) serves as cofactor.

Its subcellular location is the cytoplasm. It carries out the reaction tRNA(Ile) + L-isoleucine + ATP = L-isoleucyl-tRNA(Ile) + AMP + diphosphate. In terms of biological role, catalyzes the attachment of isoleucine to tRNA(Ile). As IleRS can inadvertently accommodate and process structurally similar amino acids such as valine, to avoid such errors it has two additional distinct tRNA(Ile)-dependent editing activities. One activity is designated as 'pretransfer' editing and involves the hydrolysis of activated Val-AMP. The other activity is designated 'posttransfer' editing and involves deacylation of mischarged Val-tRNA(Ile). This chain is Isoleucine--tRNA ligase, found in Chlamydia trachomatis serovar L2 (strain ATCC VR-902B / DSM 19102 / 434/Bu).